The following is a 236-amino-acid chain: TVP38/TMEM64 family membrane protein YdjX (236 aa).

5 helical membrane-spanning segments follow: residues 7–27 (FLFA…FGLF), 50–70 (LYIL…ILVI), 72–92 (GGIV…ATLA), 156–176 (IAFW…IVIY), and 192–212 (FILQ…LAKL). A VTT domain region spans residues 73-183 (GIVFGPLLGT…VIYTVMASDL (111 aa)).

It belongs to the TVP38/TMEM64 family.

The protein resides in the cell membrane. This chain is TVP38/TMEM64 family membrane protein YdjX (ydjX), found in Escherichia coli (strain K12).